Reading from the N-terminus, the 66-residue chain is Large ribosomal subunit protein bL33c (66 aa).

The protein belongs to the bacterial ribosomal protein bL33 family.

It is found in the plastid. The protein resides in the chloroplast. The polypeptide is Large ribosomal subunit protein bL33c (Fagopyrum esculentum subsp. ancestrale (Wild buckwheat)).